Consider the following 341-residue polypeptide: Brain-specific homeobox/POU domain protein 3 (341 aa).

Residues 55-65 (RGAEALAAVDI) carry the POU-IV box motif. The region spanning 182-259 (ETETDPRELE…ILEAWLEEAE (78 aa)) is the POU-specific domain. Residues 277–336 (KKRKRTSIAAPEKRSLEAYFAVQPRPSSEKIAAIAEKLDLKKNVVRVWFCNQRQKQKRMK) constitute a DNA-binding region (homeobox).

This sequence belongs to the POU transcription factor family. Class-4 subfamily.

The protein resides in the nucleus. In terms of biological role, may play a role in specifying terminally differentiated neuronal phenotypes. The polypeptide is Brain-specific homeobox/POU domain protein 3 (BRN3) (Gallus gallus (Chicken)).